A 301-amino-acid polypeptide reads, in one-letter code: Glycine--tRNA ligase alpha subunit (301 aa).

This sequence belongs to the class-II aminoacyl-tRNA synthetase family. In terms of assembly, tetramer of two alpha and two beta subunits.

Its subcellular location is the cytoplasm. The catalysed reaction is tRNA(Gly) + glycine + ATP = glycyl-tRNA(Gly) + AMP + diphosphate. The polypeptide is Glycine--tRNA ligase alpha subunit (Shewanella amazonensis (strain ATCC BAA-1098 / SB2B)).